Here is a 309-residue protein sequence, read N- to C-terminus: Dicarboxylate carrier UCP2 (309 aa).

The Mitochondrial intermembrane portion of the chain corresponds to M1 to K16. Solcar repeat units lie at residues P11–F106, A114–T203, and D212–A297. Residues K16 to L63 are important for interaction with long-chain fatty acids. A helical membrane pass occupies residues F17–R40. Residues L41–S77 lie on the Mitochondrial matrix side of the membrane. Residues L78–V103 form a helical membrane-spanning segment. At K104–R119 the chain is on the mitochondrial intermembrane side. Residues L120 to Q145 form a helical membrane-spanning segment. Residues A146 to R173 lie on the Mitochondrial matrix side of the membrane. A helical membrane pass occupies residues G174–L199. Residues I200 to H217 are Mitochondrial intermembrane-facing. The helical transmembrane segment at F218–Y242 threads the bilayer. The Mitochondrial matrix segment spans residues M243 to A268. Residues F269–L294 traverse the membrane as a helical segment. The interval L278 to V285 is important for interaction with long-chain fatty acids. Residues K295–F309 lie on the Mitochondrial intermembrane side of the membrane.

Belongs to the mitochondrial carrier (TC 2.A.29) family. In terms of assembly, homotetramer. Adopts an asymmetrical dimer of dimers functional form. Interacts with MICU1 (when methylated); leading to decrease the calcium sensitivity of MICU1. As to expression, expressed in a variety of organs, with predominant expression in the heart, lung and spleen.

The protein localises to the mitochondrion inner membrane. The catalysed reaction is L-aspartate(out) + phosphate(in) + H(+)(in) = L-aspartate(in) + phosphate(out) + H(+)(out). It catalyses the reaction oxaloacetate(out) + phosphate(in) + H(+)(in) = oxaloacetate(in) + phosphate(out) + H(+)(out). It carries out the reaction (S)-malate(out) + phosphate(in) + H(+)(in) = (S)-malate(in) + phosphate(out) + H(+)(out). The enzyme catalyses malonate(out) + phosphate(in) + H(+)(in) = malonate(in) + phosphate(out) + H(+)(out). The catalysed reaction is sulfate(out) + phosphate(in) + H(+)(in) = sulfate(in) + phosphate(out) + H(+)(out). It catalyses the reaction (S)-malate(out) = (S)-malate(in). It carries out the reaction L-aspartate(out) = L-aspartate(in). The enzyme catalyses phosphate(in) = phosphate(out). The catalysed reaction is chloride(in) = chloride(out). It catalyses the reaction H(+)(in) = H(+)(out). It carries out the reaction a long-chain fatty acid(out) = a long-chain fatty acid(in). Functionally, antiporter that exports dicarboxylate intermediates of the Krebs cycle in exchange for phosphate plus a proton across the inner membrane of mitochondria, a process driven by mitochondrial motive force with an overall impact on glycolysis, glutaminolysis and glutathione-dependent redox balance. Continuous export of oxaloacetate and related four-carbon dicarboxylates from mitochondrial matrix into the cytosol negatively regulates the oxidation of acetyl-CoA substrates via the Krebs cycle lowering the ATP/ADP ratio and reactive oxygen species (ROS) production. May mediate inducible proton entry into the mitochondrial matrix affecting ATP turnover as a protection mechanism against oxidative stress. The proton currents are most likely associated with fatty acid flipping across the inner membrane of mitochondria in a metabolic process regulated by free fatty acids and purine nucleotides. Regulates the use of glucose as a source of energy. Required for glucose-induced DRP1-dependent mitochondrial fission and neuron activation in the ventromedial nucleus of the hypothalamus (VMH). This mitochondrial adaptation mechanism modulates the VMH pool of glucose-excited neurons with an impact on systemic glucose homeostasis. Regulates ROS levels and metabolic reprogramming of macrophages during the resolution phase of inflammation. Attenuates ROS production in response to IL33 to preserve the integrity of the Krebs cycle required for persistent production of itaconate and subsequent GATA3-dependent differentiation of inflammation-resolving alternatively activated macrophages. Can unidirectionally transport anions including L-malate, L-aspartate, phosphate and chloride ions. Does not mediate adaptive thermogenesis. The polypeptide is Dicarboxylate carrier UCP2 (Ucp2) (Rattus norvegicus (Rat)).